A 402-amino-acid polypeptide reads, in one-letter code: Nodulation protein E (402 aa).

Residues 2–401 (DRRVVITGIG…GMNAVLAFRQ (400 aa)) enclose the Ketosynthase family 3 (KS3) domain. Catalysis depends on for beta-ketoacyl synthase activity residues cysteine 162, histidine 294, and histidine 331. The helical transmembrane segment at 329-348 (HAHCLGAASALEMIACVMAI) threads the bilayer.

It belongs to the thiolase-like superfamily. Beta-ketoacyl-ACP synthases family.

The protein resides in the cell inner membrane. Its function is as follows. Proposed to synthesize NOD factor fatty acyl chain. Involved in the synthesis of a highly unsaturated fatty acid moiety, which forms part of a lipo-oligosaccharide that is responsible for host specificity. In Rhizobium sp. (strain N33), this protein is Nodulation protein E (nodE).